Reading from the N-terminus, the 395-residue chain is Elongation factor Tu (395 aa).

The region spanning 10–204 is the tr-type G domain; the sequence is KPHVNIGTIG…TVDSYIPEPA (195 aa). Residues 19–26 form a G1 region; sequence GHVDHGKT. 19–26 is a binding site for GTP; it reads GHVDHGKT. T26 is a binding site for Mg(2+). The tract at residues 60-64 is G2; that stretch reads GITIN. Residues 81-84 form a G3 region; it reads DAPG. GTP contacts are provided by residues 81–85 and 136–139; these read DAPGH and NKTD. Residues 136–139 form a G4 region; sequence NKTD. Residues 174–176 are G5; the sequence is SAL.

This sequence belongs to the TRAFAC class translation factor GTPase superfamily. Classic translation factor GTPase family. EF-Tu/EF-1A subfamily. In terms of assembly, monomer.

It localises to the cytoplasm. It catalyses the reaction GTP + H2O = GDP + phosphate + H(+). Functionally, GTP hydrolase that promotes the GTP-dependent binding of aminoacyl-tRNA to the A-site of ribosomes during protein biosynthesis. In Leuconostoc mesenteroides subsp. mesenteroides (strain ATCC 8293 / DSM 20343 / BCRC 11652 / CCM 1803 / JCM 6124 / NCDO 523 / NBRC 100496 / NCIMB 8023 / NCTC 12954 / NRRL B-1118 / 37Y), this protein is Elongation factor Tu.